The primary structure comprises 338 residues: Phenylalanine--tRNA ligase alpha subunit (338 aa).

Residue Glu252 participates in Mg(2+) binding.

Belongs to the class-II aminoacyl-tRNA synthetase family. Phe-tRNA synthetase alpha subunit type 1 subfamily. Tetramer of two alpha and two beta subunits. Requires Mg(2+) as cofactor.

It is found in the cytoplasm. The enzyme catalyses tRNA(Phe) + L-phenylalanine + ATP = L-phenylalanyl-tRNA(Phe) + AMP + diphosphate + H(+). This is Phenylalanine--tRNA ligase alpha subunit from Pseudomonas aeruginosa (strain UCBPP-PA14).